The chain runs to 319 residues: HTH-type transcriptional regulator YidZ (319 aa).

In terms of domain architecture, HTH lysR-type spans 8 to 65 (LDLNLLLCLQLLMQERSVTKAAKRMNVTPSAVSKSLAKLRAWFDDPLFVNSPLGLSPT). The segment at residues 25-44 (VTKAAKRMNVTPSAVSKSLA) is a DNA-binding region (H-T-H motif).

The protein belongs to the LysR transcriptional regulatory family.

Functionally, involved in anaerobic NO protection. The protein is HTH-type transcriptional regulator YidZ of Escherichia coli O6:H1 (strain CFT073 / ATCC 700928 / UPEC).